Here is a 318-residue protein sequence, read N- to C-terminus: L-lactate dehydrogenase (318 aa).

Positions 14, 35, 40, and 66 each coordinate NAD(+). Substrate-binding positions include R89 and 121-124; that span reads NPVD. NAD(+) is bound at residue S144. 149 to 152 provides a ligand contact to substrate; the sequence is DTAR. The active-site Proton acceptor is the H176. Position 220 is a phosphotyrosine (Y220). Residue T229 coordinates substrate.

The protein belongs to the LDH/MDH superfamily. LDH family. In terms of assembly, homotetramer.

It is found in the cytoplasm. The catalysed reaction is (S)-lactate + NAD(+) = pyruvate + NADH + H(+). It functions in the pathway fermentation; pyruvate fermentation to lactate; (S)-lactate from pyruvate: step 1/1. Its function is as follows. Catalyzes the conversion of lactate to pyruvate. This Staphylococcus haemolyticus (strain JCSC1435) protein is L-lactate dehydrogenase.